The chain runs to 136 residues: Serine--glyoxylate aminotransferase (136 aa).

The protein belongs to the class-V pyridoxal-phosphate-dependent aminotransferase family. As to quaternary structure, homodimer. The cofactor is pyridoxal 5'-phosphate. Expressed in leaves but not in root tissue or seedlings.

The protein resides in the peroxisome. It catalyses the reaction glyoxylate + L-serine = 3-hydroxypyruvate + glycine. It carries out the reaction glyoxylate + L-alanine = glycine + pyruvate. Inhibited by aminooxyacetate. The sequence is that of Serine--glyoxylate aminotransferase from Zea mays (Maize).